Reading from the N-terminus, the 311-residue chain is Ribosomal RNA small subunit methyltransferase H (311 aa).

Residues 32–34, D52, F79, D100, and Q107 contribute to the S-adenosyl-L-methionine site; that span reads AGH. Residues 287–311 are disordered; the sequence is TASQEELEENNRARSAKLRIAEKRK. The segment covering 300-311 has biased composition (basic residues); the sequence is RSAKLRIAEKRK.

The protein belongs to the methyltransferase superfamily. RsmH family.

The protein localises to the cytoplasm. The enzyme catalyses cytidine(1402) in 16S rRNA + S-adenosyl-L-methionine = N(4)-methylcytidine(1402) in 16S rRNA + S-adenosyl-L-homocysteine + H(+). Functionally, specifically methylates the N4 position of cytidine in position 1402 (C1402) of 16S rRNA. This Bacillus subtilis (strain 168) protein is Ribosomal RNA small subunit methyltransferase H.